The sequence spans 121 residues: Large ribosomal subunit protein uL14c (121 aa).

Belongs to the universal ribosomal protein uL14 family. In terms of assembly, part of the 50S ribosomal subunit.

The protein localises to the plastid. It localises to the chloroplast. In terms of biological role, binds to 23S rRNA. This is Large ribosomal subunit protein uL14c from Thalassiosira pseudonana (Marine diatom).